Here is a 339-residue protein sequence, read N- to C-terminus: 4-dimethylallyltryptophan N-methyltransferase easF (339 aa).

It belongs to the methyltransferase superfamily. As to quaternary structure, homodimer.

It catalyses the reaction 4-(3-methylbut-2-enyl)-L-tryptophan + S-adenosyl-L-methionine = 4-(3-methylbut-2-enyl)-L-abrine + S-adenosyl-L-homocysteine + H(+). It functions in the pathway alkaloid biosynthesis; ergot alkaloid biosynthesis. In terms of biological role, 4-dimethylallyltryptophan N-methyltransferase; part of the gene cluster that mediates the biosynthesis of fumiclavanine C, a fungal ergot alkaloid. DmaW catalyzes the first step of ergot alkaloid biosynthesis by condensing dimethylallyl diphosphate (DMAP) and tryptophan to form 4-dimethylallyl-L-tryptophan. The second step is catalyzed by the methyltransferase easF that methylates 4-dimethylallyl-L-tryptophan in the presence of S-adenosyl-L-methionine, resulting in the formation of 4-dimethylallyl-L-abrine. The catalase easC and the FAD-dependent oxidoreductase easE then transform 4-dimethylallyl-L-abrine to chanoclavine-I which is further oxidized by EasD in the presence of NAD(+), resulting in the formation of chanoclavine-I aldehyde. EasA reduces chanoclavine-I aldehyde to dihydrochanoclavine-I aldehyde that spontaneously dehydrates to form 6,8-dimethyl-6,7-didehydroergoline. EasG then catalyzes the reduction of 6,8-dimethyl-6,7-didehydroergoline to form festuclavine. Hydrolysis of festuclavine by easM then leads to the formation of fumigaclavine B which is in turn acetylated by easN to fumigaclavine A. Finally, easL catalyzes the conversion of fumigaclavine A into fumigaclavine C by attaching a dimethylallyl moiety to C-2 of the indole nucleus. The sequence is that of 4-dimethylallyltryptophan N-methyltransferase easF from Aspergillus fumigatus (strain ATCC MYA-4609 / CBS 101355 / FGSC A1100 / Af293) (Neosartorya fumigata).